Reading from the N-terminus, the 1576-residue chain is Proton channel OtopLc (1576 aa).

2 disordered regions span residues 1 to 602 and 621 to 736; these read MDSS…SSPP and QIGS…SSPV. Composition is skewed to low complexity over residues 58–67 and 76–85; these read SLAEEVLLLV and LLGQPLPTLT. 4 stretches are compositionally biased toward acidic residues: residues 103–116, 159–171, 186–198, and 206–216; these read DEGDDEDEREEPVP, DDGEGEETDDAEE, SNPDEEEEEEEQE, and PKEEDEEEDDD. Over residues 219 to 228 the composition is skewed to pro residues; the sequence is TPPPPLPPLP. Polar residues predominate over residues 229 to 241; it reads SNFSYVQGHNLGQ. An N-linked (GlcNAc...) asparagine glycan is attached at N230. Over residues 243-252 the composition is skewed to low complexity; that stretch reads TPPLTKSPSN. The span at 253 to 264 shows a compositional bias: pro residues; it reads SPSPPVTPPPCP. The N-linked (GlcNAc...) asparagine glycan is linked to N267. The segment covering 316–341 has biased composition (acidic residues); the sequence is DQPEPEDQPPEPENEPEPEPEPEPEP. Basic and acidic residues predominate over residues 347–356; sequence AREDYSRSLD. A compositionally biased stretch (polar residues) spans 362 to 376; it reads TTITTPPSNGYSASS. The span at 384-393 shows a compositional bias: basic and acidic residues; that stretch reads HFAELDEDRG. The span at 402–419 shows a compositional bias: acidic residues; sequence QEPEEEVEEEEEEEEEEL. The segment covering 420–433 has biased composition (basic and acidic residues); it reads TKETDEISVDRESL. The segment covering 434–457 has biased composition (polar residues); it reads QDQGGDSISSPRPASILTGSISTS. The span at 465–507 shows a compositional bias: low complexity; the sequence is SPKPESRGPSRSGSQRSQLRSGSQQGSIAESRGGSRIGSRTGS. 2 stretches are compositionally biased toward polar residues: residues 519-534 and 545-555; these read PQASLKSQTSIRSQGQ and KSGSQRMQSPQ. The segment covering 563–575 has biased composition (pro residues); the sequence is MPSPPLMRSPPPE. Low complexity predominate over residues 661–685; that stretch reads AAAAPAVTTTAATTAVTSQPRSHFT. Residues 686-709 are compositionally biased toward basic residues; it reads SSHHHYHLPHQFQHPHHQNHHTHS. A helical transmembrane segment spans residues 741–761; it reads LFMAGVAPPIAAGAGSLMAMP. The segment at 771–845 is disordered; it reads GRVSARSGSQ…GSSSQPALSG (75 aa). Residues 776 to 799 are compositionally biased toward polar residues; sequence RSGSQHHVTIDESSLPSHKGNIQE. The span at 826–839 shows a compositional bias: low complexity; sequence DSSDPPSSPGGSSS. Transmembrane regions (helical) follow at residues 891-911 and 931-951; these read ALATLFSALYGKLLVVMGIAF and LYLYIGSMIFLLFMYATLIWG. A compositionally biased stretch (polar residues) spans 962–973; it reads PSKSATKASGTD. Positions 962-1001 are disordered; sequence PSKSATKASGTDSMDESDTDSNSVHHRLPPPIPVRRPSLL. 3 consecutive transmembrane segments (helical) span residues 1019–1039, 1051–1071, and 1084–1104; these read GAVAFGIGSMIYSGLEFGQYF, LLALTPATRMAFIFIQMYFIF, and IIARFGLMHMIGTNLAVWLNV. Residue N1121 is glycosylated (N-linked (GlcNAc...) asparagine). 7 helical membrane-spanning segments follow: residues 1179 to 1199, 1239 to 1259, 1272 to 1292, 1310 to 1330, 1340 to 1360, 1381 to 1401, and 1412 to 1432; these read FLFPCTIEYSLICAAILYVMW, FVGILILVLTIISLIIFFVLI, VTICELLIYGTATIATLVGMI, ILLVGAQTGSFLYNIFTVIAG, LVPINALASIVQTACQTMFIL, IVTFMLVVNLAMWAISTLEKS, and FYGLWAWTIITHVSMPLAIFY. The N-linked (GlcNAc...) asparagine glycan is linked to N1479. The interval 1498 to 1549 is disordered; sequence EEVDSGESNSAEDAGAGAGSGGSRGSGGGAGAAEAGEAGEEGQQGGDSSCGL. Residues 1503 to 1512 are compositionally biased toward low complexity; sequence GESNSAEDAG. The span at 1513–1528 shows a compositional bias: gly residues; that stretch reads AGAGSGGSRGSGGGAG.

Belongs to the otopetrin family.

It localises to the cell membrane. Its function is as follows. Proton-selective channel that specifically transports protons into cells. Proton-selective channel activity is probably required in cell types that use changes in intracellular pH for cell signaling or to regulate biochemical or developmental processes. This chain is Proton channel OtopLc, found in Drosophila melanogaster (Fruit fly).